The sequence spans 392 residues: Putative RNA-binding protein Luc7-like 2 (392 aa).

Position 18 is a phosphoserine (Ser-18). The stretch at 102–177 (EVAKKRLAET…EAEEVYRNSM (76 aa)) forms a coiled coil. The span at 235–257 (KQEKRNQERLKRREEREREEREK) shows a compositional bias: basic and acidic residues. Residues 235–392 (KQEKRNQERL…SSEEREAGEI (158 aa)) form a disordered region. Residues 258–321 (LRRSRSHSKN…RSRSHQRSRH (64 aa)) are compositionally biased toward basic residues. 5-hydroxylysine; by JMJD6 occurs at positions 266 and 269. Basic and acidic residues-rich tracts occupy residues 337–364 (KERF…DRDR) and 377–392 (RSED…AGEI).

The protein belongs to the Luc7 family. Interacts with SCNM1.

The protein resides in the nucleus speckle. Its subcellular location is the nucleus. The protein localises to the nucleoplasm. Functionally, may bind to RNA via its Arg/Ser-rich domain. The polypeptide is Putative RNA-binding protein Luc7-like 2 (LUC7L2) (Homo sapiens (Human)).